Consider the following 161-residue polypeptide: Ribosome maturation factor RimP (161 aa).

The protein belongs to the RimP family.

The protein resides in the cytoplasm. Required for maturation of 30S ribosomal subunits. The sequence is that of Ribosome maturation factor RimP from Pelobacter propionicus (strain DSM 2379 / NBRC 103807 / OttBd1).